The following is a 58-amino-acid chain: Ribulose bisphosphate carboxylase large chain (58 aa).

Positions methionine 1–serine 2 are excised as a propeptide. The residue at position 3 (proline 3) is an N-acetylproline. An N6,N6,N6-trimethyllysine modification is found at lysine 14.

The protein belongs to the RuBisCO large chain family. Type I subfamily. As to quaternary structure, heterohexadecamer of 8 large chains and 8 small chains.

The protein localises to the plastid. The protein resides in the chloroplast. The catalysed reaction is 2 (2R)-3-phosphoglycerate + 2 H(+) = D-ribulose 1,5-bisphosphate + CO2 + H2O. The enzyme catalyses D-ribulose 1,5-bisphosphate + O2 = 2-phosphoglycolate + (2R)-3-phosphoglycerate + 2 H(+). In terms of biological role, ruBisCO catalyzes two reactions: the carboxylation of D-ribulose 1,5-bisphosphate, the primary event in carbon dioxide fixation, as well as the oxidative fragmentation of the pentose substrate in the photorespiration process. Both reactions occur simultaneously and in competition at the same active site. This chain is Ribulose bisphosphate carboxylase large chain (rbcL), found in Euphorbia characias (Albanian spurge).